We begin with the raw amino-acid sequence, 413 residues long: L-cysteine:1D-myo-inositol 2-amino-2-deoxy-alpha-D-glucopyranoside ligase (413 aa).

A Zn(2+)-binding site is contributed by Cys-43. Residues 43 to 46 (CGIT), Thr-58, and 81 to 83 (NIT) each bind L-cysteinyl-5'-AMP. The 'HIGH' region motif lies at 45–55 (ITPYDATHLGH). Residues 187–192 (ERGGDP) carry the 'ERGGDP' region motif. Trp-227 is a binding site for L-cysteinyl-5'-AMP. Cys-231 serves as a coordination point for Zn(2+). Residue 249-251 (GND) coordinates L-cysteinyl-5'-AMP. His-256 contributes to the Zn(2+) binding site. Val-283 is a binding site for L-cysteinyl-5'-AMP. The 'KMSKS' region motif lies at 289–293 (KMSKS).

The protein belongs to the class-I aminoacyl-tRNA synthetase family. MshC subfamily. As to quaternary structure, monomer. Requires Zn(2+) as cofactor.

The enzyme catalyses 1D-myo-inositol 2-amino-2-deoxy-alpha-D-glucopyranoside + L-cysteine + ATP = 1D-myo-inositol 2-(L-cysteinylamino)-2-deoxy-alpha-D-glucopyranoside + AMP + diphosphate + H(+). Catalyzes the ATP-dependent condensation of GlcN-Ins and L-cysteine to form L-Cys-GlcN-Ins. The chain is L-cysteine:1D-myo-inositol 2-amino-2-deoxy-alpha-D-glucopyranoside ligase from Gordonia bronchialis (strain ATCC 25592 / DSM 43247 / BCRC 13721 / JCM 3198 / KCTC 3076 / NBRC 16047 / NCTC 10667) (Rhodococcus bronchialis).